The primary structure comprises 416 residues: Putative competence-damage inducible protein (416 aa).

It belongs to the CinA family.

The chain is Putative competence-damage inducible protein from Geobacillus sp. (strain WCH70).